The primary structure comprises 495 residues: Protein SLENDER RICE1-LIKE 1 (495 aa).

The GRAS domain maps to 77 to 449 (EEEEVAGIRL…RPLFSASAWE (373 aa)). The leucine repeat I (LRI) stretch occupies residues 84–140 (IRLVHLLMSCAGAIEAGDHALASAQLADSHAALAAVSAASGIGRVAVHFTTALSRRL). Positions 158 to 223 (YHHFYEACPY…GGPPFLRITG (66 aa)) are VHIID. The VHIID motif lies at 189–193 (VHVID). Residues 237-269 (DVGLRLADLARSVRVRFSFRGVAANSLDEVRPW) form a leucine repeat II (LRII) region. A PFYRE region spans residues 279–371 (VAFNSVLQLH…EAYLQREICD (93 aa)). An LXXLL motif motif is present at residues 287–291 (LHRLL). The segment at 374 to 449 (CGEGAARRER…RPLFSASAWE (76 aa)) is SAW. Residues 451-495 (AGDGGGDNNNNSNSNVSGSSGSDSNNSGSSNGKSSGARDGSSVCL) are disordered. Over residues 458–485 (NNNNSNSNVSGSSGSDSNNSGSSNGKSS) the composition is skewed to low complexity.

This sequence belongs to the GRAS family. As to expression, expressed in elongating internodes and flowers. Expressed in floral meristem, stamen primordia and tapetum in developing anthers. Expressed at low levels in roots, shoot apices and rachis.

The protein resides in the nucleus. In terms of biological role, probable transcriptional regulator that acts as a repressor of the gibberellin (GA) signaling pathway. Its repressive activity is weaker than that of SLR1. Its overexpression prevents the GA signaling pathway and induces a dwarf phenotype. The protein is Protein SLENDER RICE1-LIKE 1 of Oryza sativa subsp. japonica (Rice).